A 216-amino-acid chain; its full sequence is MOB kinase activator 3B (216 aa).

Residues C82, C87, H164, and H169 each contribute to the Zn(2+) site.

Functionally, modulates LATS1 expression in the Hippo signaling pathway which plays a pivotal role in organ size control and tumor suppression by restricting proliferation and promoting apoptosis. This is MOB kinase activator 3B (Mob3b) from Mus musculus (Mouse).